Consider the following 348-residue polypeptide: Succinoglycan biosynthesis protein ExoO (348 aa).

Residues 322-348 are disordered; sequence HSAPRAAPVTAAAERSPLGNDPRISKG. Positions 324–334 are enriched in low complexity; the sequence is APRAAPVTAAA.

The protein belongs to the glycosyltransferase 2 family.

The protein resides in the cytoplasm. Its pathway is glycan metabolism; exopolysaccharide biosynthesis. In terms of biological role, glycosyltransferase required for the synthesis of succinoglycan (EPS I). Needed for the addition of the fifth sugar (glucose), catalyzes the formation of a beta-1,6 linkage between the fourth and fifth sugar. The polypeptide is Succinoglycan biosynthesis protein ExoO (exoO) (Rhizobium meliloti (strain 1021) (Ensifer meliloti)).